We begin with the raw amino-acid sequence, 285 residues long: ATP phosphoribosyltransferase (285 aa).

Belongs to the ATP phosphoribosyltransferase family. Long subfamily. It depends on Mg(2+) as a cofactor.

It is found in the cytoplasm. The enzyme catalyses 1-(5-phospho-beta-D-ribosyl)-ATP + diphosphate = 5-phospho-alpha-D-ribose 1-diphosphate + ATP. It participates in amino-acid biosynthesis; L-histidine biosynthesis; L-histidine from 5-phospho-alpha-D-ribose 1-diphosphate: step 1/9. Its activity is regulated as follows. Feedback inhibited by histidine. Functionally, catalyzes the condensation of ATP and 5-phosphoribose 1-diphosphate to form N'-(5'-phosphoribosyl)-ATP (PR-ATP). Has a crucial role in the pathway because the rate of histidine biosynthesis seems to be controlled primarily by regulation of HisG enzymatic activity. The chain is ATP phosphoribosyltransferase from Methanocella arvoryzae (strain DSM 22066 / NBRC 105507 / MRE50).